Here is a 212-residue protein sequence, read N- to C-terminus: Outer surface protein C (212 aa).

The signal sequence occupies residues 1-18 (MKKNTLSAILMTLFLFIS). C19 carries N-palmitoyl cysteine lipidation. The S-diacylglycerol cysteine moiety is linked to residue C19.

The protein belongs to the OspC lipoprotein family. Homodimer. Interacts with tick Ixodes ricinus salivary protein Iric-1. Binds human (host) plasminogen. The N-terminus is blocked.

The protein resides in the cell outer membrane. Its subcellular location is the cell surface. Its function is as follows. Major immunodominant protein in mammalian hosts. Required for initial stages of mammalian infection. Inhibits macrophage-mediated phagocytosis of the bacteria. Binds human plasminogen; this probably confers an extracellular protease activity on the bacteria that allows it to traverse tissue. Unlike closely related strain B31, its interaction with Ixodes ricinus salivary protein Iric-1 does not protect against antibody-mediated destruction in vitro. This Borreliella afzelii (strain PKo) (Borrelia afzelii) protein is Outer surface protein C.